The chain runs to 307 residues: Methionyl-tRNA formyltransferase (307 aa).

108–111 (SLLP) lines the (6S)-5,6,7,8-tetrahydrofolate pocket.

Belongs to the Fmt family.

It carries out the reaction L-methionyl-tRNA(fMet) + (6R)-10-formyltetrahydrofolate = N-formyl-L-methionyl-tRNA(fMet) + (6S)-5,6,7,8-tetrahydrofolate + H(+). Its function is as follows. Attaches a formyl group to the free amino group of methionyl-tRNA(fMet). The formyl group appears to play a dual role in the initiator identity of N-formylmethionyl-tRNA by promoting its recognition by IF2 and preventing the misappropriation of this tRNA by the elongation apparatus. This chain is Methionyl-tRNA formyltransferase, found in Xylella fastidiosa (strain M23).